The sequence spans 665 residues: DNA ligase (665 aa).

NAD(+) contacts are provided by residues 32–36 (DSEYD), 81–82 (SL), and Glu110. The active-site N6-AMP-lysine intermediate is the Lys112. Positions 133, 167, 283, and 307 each coordinate NAD(+). Zn(2+) contacts are provided by Cys401, Cys404, Cys419, and Cys424. The BRCT domain maps to 586 to 665 (EGHPDFSGKT…AAFIEKQNGI (80 aa)).

It belongs to the NAD-dependent DNA ligase family. LigA subfamily. Mg(2+) serves as cofactor. Mn(2+) is required as a cofactor.

It catalyses the reaction NAD(+) + (deoxyribonucleotide)n-3'-hydroxyl + 5'-phospho-(deoxyribonucleotide)m = (deoxyribonucleotide)n+m + AMP + beta-nicotinamide D-nucleotide.. Functionally, DNA ligase that catalyzes the formation of phosphodiester linkages between 5'-phosphoryl and 3'-hydroxyl groups in double-stranded DNA using NAD as a coenzyme and as the energy source for the reaction. It is essential for DNA replication and repair of damaged DNA. This Staphylococcus epidermidis (strain ATCC 12228 / FDA PCI 1200) protein is DNA ligase.